Reading from the N-terminus, the 259-residue chain is 3-deoxy-manno-octulosonate cytidylyltransferase (259 aa).

This sequence belongs to the KdsB family.

It localises to the cytoplasm. The catalysed reaction is 3-deoxy-alpha-D-manno-oct-2-ulosonate + CTP = CMP-3-deoxy-beta-D-manno-octulosonate + diphosphate. It participates in nucleotide-sugar biosynthesis; CMP-3-deoxy-D-manno-octulosonate biosynthesis; CMP-3-deoxy-D-manno-octulosonate from 3-deoxy-D-manno-octulosonate and CTP: step 1/1. It functions in the pathway bacterial outer membrane biogenesis; lipopolysaccharide biosynthesis. Functionally, activates KDO (a required 8-carbon sugar) for incorporation into bacterial lipopolysaccharide in Gram-negative bacteria. This Actinobacillus succinogenes (strain ATCC 55618 / DSM 22257 / CCUG 43843 / 130Z) protein is 3-deoxy-manno-octulosonate cytidylyltransferase.